A 335-amino-acid polypeptide reads, in one-letter code: Tetraacyldisaccharide 4'-kinase (335 aa).

51–58 (HVGGAGKT) is a binding site for ATP.

The protein belongs to the LpxK family.

It catalyses the reaction a lipid A disaccharide + ATP = a lipid IVA + ADP + H(+). It functions in the pathway glycolipid biosynthesis; lipid IV(A) biosynthesis; lipid IV(A) from (3R)-3-hydroxytetradecanoyl-[acyl-carrier-protein] and UDP-N-acetyl-alpha-D-glucosamine: step 6/6. Functionally, transfers the gamma-phosphate of ATP to the 4'-position of a tetraacyldisaccharide 1-phosphate intermediate (termed DS-1-P) to form tetraacyldisaccharide 1,4'-bis-phosphate (lipid IVA). The protein is Tetraacyldisaccharide 4'-kinase of Nitrobacter hamburgensis (strain DSM 10229 / NCIMB 13809 / X14).